A 600-amino-acid chain; its full sequence is Elongation factor 4 (600 aa).

The 183-residue stretch at K5 to K187 folds into the tr-type G domain. GTP-binding positions include D17–T22 and N134–D137.

This sequence belongs to the TRAFAC class translation factor GTPase superfamily. Classic translation factor GTPase family. LepA subfamily.

It localises to the cell inner membrane. The catalysed reaction is GTP + H2O = GDP + phosphate + H(+). In terms of biological role, required for accurate and efficient protein synthesis under certain stress conditions. May act as a fidelity factor of the translation reaction, by catalyzing a one-codon backward translocation of tRNAs on improperly translocated ribosomes. Back-translocation proceeds from a post-translocation (POST) complex to a pre-translocation (PRE) complex, thus giving elongation factor G a second chance to translocate the tRNAs correctly. Binds to ribosomes in a GTP-dependent manner. The chain is Elongation factor 4 from Rickettsia felis (strain ATCC VR-1525 / URRWXCal2) (Rickettsia azadi).